The chain runs to 89 residues: Small ribosomal subunit protein uS15 (89 aa).

Positions 1–21 are enriched in basic and acidic residues; it reads MSIAAERKAEVIKTNARKDGD. A disordered region spans residues 1–24; that stretch reads MSIAAERKAEVIKTNARKDGDTGS.

This sequence belongs to the universal ribosomal protein uS15 family. In terms of assembly, part of the 30S ribosomal subunit. Forms a bridge to the 50S subunit in the 70S ribosome, contacting the 23S rRNA.

One of the primary rRNA binding proteins, it binds directly to 16S rRNA where it helps nucleate assembly of the platform of the 30S subunit by binding and bridging several RNA helices of the 16S rRNA. Functionally, forms an intersubunit bridge (bridge B4) with the 23S rRNA of the 50S subunit in the ribosome. The protein is Small ribosomal subunit protein uS15 of Rhodopseudomonas palustris (strain BisA53).